A 457-amino-acid polypeptide reads, in one-letter code: ATP synthase subunit beta (457 aa).

Residue 147-154 (GGAGVGKT) participates in ATP binding.

Belongs to the ATPase alpha/beta chains family. F-type ATPases have 2 components, CF(1) - the catalytic core - and CF(0) - the membrane proton channel. CF(1) has five subunits: alpha(3), beta(3), gamma(1), delta(1), epsilon(1). CF(0) has three main subunits: a(1), b(2) and c(9-12). The alpha and beta chains form an alternating ring which encloses part of the gamma chain. CF(1) is attached to CF(0) by a central stalk formed by the gamma and epsilon chains, while a peripheral stalk is formed by the delta and b chains.

The protein resides in the cell inner membrane. It carries out the reaction ATP + H2O + 4 H(+)(in) = ADP + phosphate + 5 H(+)(out). Functionally, produces ATP from ADP in the presence of a proton gradient across the membrane. The catalytic sites are hosted primarily by the beta subunits. The chain is ATP synthase subunit beta from Glaesserella parasuis serovar 5 (strain SH0165) (Haemophilus parasuis).